Reading from the N-terminus, the 249-residue chain is Expansin-A19 (249 aa).

Residues 1-21 form the signal peptide; the sequence is MGNIFLQLLAVVALCIAPARS. Positions 41–154 constitute an Expansin-like EG45 domain; it reads GGACGYGNLY…QQVKCWRYGG (114 aa). N-linked (GlcNAc...) asparagine glycans are attached at residues N116 and N216. An Expansin-like CBD domain is found at 164 to 243; the sequence is YFELVLVTNM…GWSFGQTFST (80 aa).

The protein belongs to the expansin family. Expansin A subfamily.

It is found in the secreted. Its subcellular location is the cell wall. The protein resides in the membrane. In terms of biological role, may cause loosening and extension of plant cell walls by disrupting non-covalent bonding between cellulose microfibrils and matrix glucans. No enzymatic activity has been found. May be required for rapid internodal elongation in deepwater rice during submergence. In Oryza sativa subsp. japonica (Rice), this protein is Expansin-A19 (EXPA19).